A 642-amino-acid polypeptide reads, in one-letter code: 5-aminolevulinate synthase, non-specific, mitochondrial (642 aa).

Residues 1-56 (METVVRRCPFLSRVPQAFLQKAGKSLLFYAQNCPKMMEVGAKPAPRTVSTSAAQCQ) constitute a mitochondrion transit peptide. The tract at residues 51–109 (SAAQCQQVKETPPANEKEKTAKAAVQQAPDESQMAQTPDGTQLPPGHPSPSTSQSSGSK) is disordered. The segment covering 79-90 (PDESQMAQTPDG) has biased composition (polar residues). Residues 99 to 108 (SPSTSQSSGS) show a composition bias toward low complexity. 3 residues coordinate substrate: Arg-219, Ser-336, and Lys-355. Residues Ser-388, His-416, and Thr-444 each contribute to the pyridoxal 5'-phosphate site. The active site involves Lys-447. An N6-(pyridoxal phosphate)lysine modification is found at Lys-447. Thr-476 and Thr-477 together coordinate pyridoxal 5'-phosphate. Thr-564 is a substrate binding site. At Pro-578 the chain carries Hydroxyproline.

It belongs to the class-II pyridoxal-phosphate-dependent aminotransferase family. In terms of assembly, homodimer. Interacts (hydroxylated form) with VHL. The cofactor is pyridoxal 5'-phosphate. In normoxia, is hydroxylated at Pro-578, promoting interaction with VHL, initiating ubiquitination and subsequent degradation via the proteasome. In terms of processing, ubiquitinated; in normoxia following hydroxylation and interaction with VHL, leading to its subsequent degradation via the proteasome. Expressed in the liver, kidney, brain and testis.

It localises to the mitochondrion inner membrane. The catalysed reaction is succinyl-CoA + glycine + H(+) = 5-aminolevulinate + CO2 + CoA. It functions in the pathway porphyrin-containing compound metabolism; protoporphyrin-IX biosynthesis; 5-aminolevulinate from glycine: step 1/1. Catalyzes the pyridoxal 5'-phosphate (PLP)-dependent condensation of succinyl-CoA and glycine to form aminolevulinic acid (ALA), with CoA and CO2 as by-products. The sequence is that of 5-aminolevulinate synthase, non-specific, mitochondrial (Alas1) from Rattus norvegicus (Rat).